A 146-amino-acid chain; its full sequence is Ubiquitin-conjugating enzyme E2 variant 1D (146 aa).

Residues 13–146 form the UBC core domain; sequence PRNFRLLEEL…LVQPPEGTCF (134 aa).

Belongs to the ubiquitin-conjugating enzyme family. Heterodimer with UBC35 or UBC36. In terms of tissue distribution, expressed in roots, shoots, leaves, stems, flowers and pollen.

Functionally, has no ubiquitin ligase activity on its own. The heterodimer with UBC catalyzes the synthesis of non-canonical poly-ubiquitin chains that are linked through 'Lys-63'. This type of poly-ubiquitination does not lead to protein degradation by the proteasome. Mediates transcriptional activation of target genes. May play a role in the control of progress through the cell cycle and differentiation. Involved in the error-free DNA repair pathway and contributes to the survival of cells after DNA damage. The polypeptide is Ubiquitin-conjugating enzyme E2 variant 1D (UEV1D) (Arabidopsis thaliana (Mouse-ear cress)).